We begin with the raw amino-acid sequence, 225 residues long: Thylakoid lumenal 17.9 kDa protein, chloroplastic (225 aa).

The protein localises to the plastid. It localises to the chloroplast thylakoid lumen. This is Thylakoid lumenal 17.9 kDa protein, chloroplastic from Arabidopsis thaliana (Mouse-ear cress).